Reading from the N-terminus, the 365-residue chain is Peptidyl-prolyl cis-trans isomerase FKBP42 (365 aa).

Over residues 1–15 (MDESLEHQTQTHDQE) the composition is skewed to basic and acidic residues. The segment at 1-44 (MDESLEHQTQTHDQESEIVTEGSAVVHSEPSQEGNVPPKVDSEA) is disordered. Positions 1–163 (MDESLEHQTQ…EVIGFDETKE (163 aa)) are interaction with MDR1/PGP1. In terms of domain architecture, PPIase FKBP-type spans 67-159 (YSTCFLHYRA…LYEVEVIGFD (93 aa)). The interaction with MRP1 stretch occupies residues 163-337 (EGKARSDMTV…GKDEGGAKSK (175 aa)). TPR repeat units follow at residues 179-212 (ADRR…MGDD), 230-263 (NPCH…EEKN), and 264-297 (PKAL…APDD). Residues 310–326 (QEKALYQKQKEMYKGIF) form a calmodulin-binding region. The helical; Anchor for type IV membrane protein transmembrane segment at 338 to 357 (SLFWLIVLWQWFVSLFSRIF) threads the bilayer.

Belongs to the FKBP-type PPIase family. As to quaternary structure, interacts with calmodulin (CaM), MRP1, MRP2, MDR1/PGP1, MDR11/PGP19 and SHD/HSP90. Interacts with 1-naphthylphthalamic acid (NPA).

The protein localises to the cell membrane. It localises to the vacuole membrane. The protein resides in the endoplasmic reticulum. The catalysed reaction is [protein]-peptidylproline (omega=180) = [protein]-peptidylproline (omega=0). In terms of biological role, PPIases accelerate the folding of proteins. It catalyzes the cis-trans isomerization of proline imidic peptide bonds in oligopeptides. Modulates the uptake of MRP substrates into the vacuole; reduces metolachlor-GS (MOC-GS) and enhances 17-beta-estradiol 17-(beta-D-glucuronide) (E(2)17betaG) uptake. Regulates cell elongation and orientation. Functions as a positive regulator of PGP1-mediated auxin transport. Confers drug modulation of PGP1 efflux activity as interaction with NPA or flavonol quercetin prevents its physical and functional interaction with PGP1. Required for the proper localization of auxin-related ABCB transporters. Plays a role in brassinosteroid (BR) signaling pathway. Required for seed development by promoting stamen elongation and, to a lesser extent, anther dehiscence and pollen maturation, probably as a chaperone helping ABCB1 and ABCB19 auxin transporters localization and activation. Involved in auxin signaling in nectaries to promote starch accumulation to attract visiting pollinators. This is Peptidyl-prolyl cis-trans isomerase FKBP42 from Arabidopsis thaliana (Mouse-ear cress).